A 141-amino-acid polypeptide reads, in one-letter code: HTH-type transcriptional repressor NsrR (141 aa).

Positions 2-129 (QLTSFTDYGL…DNYTLADMVK (128 aa)) constitute an HTH rrf2-type domain. Positions 28–51 (ISQVTEVYGVSRNHMVKIINQLSR) form a DNA-binding region, H-T-H motif. Residues Cys-91, Cys-96, and Cys-102 each coordinate [2Fe-2S] cluster.

The cofactor is [2Fe-2S] cluster.

In terms of biological role, nitric oxide-sensitive repressor of genes involved in protecting the cell against nitrosative stress. May require iron for activity. This chain is HTH-type transcriptional repressor NsrR, found in Yersinia pseudotuberculosis serotype O:1b (strain IP 31758).